We begin with the raw amino-acid sequence, 714 residues long: Fatty acid oxidation complex subunit alpha (714 aa).

The segment at 1 to 190 (MEMASAFTLN…KLGLVDDVVP (190 aa)) is enoyl-CoA hydratase. The 3-hydroxyacyl-CoA dehydrogenase stretch occupies residues 306-714 (APLNSVGILG…FWKTTATDLQ (409 aa)).

This sequence in the N-terminal section; belongs to the enoyl-CoA hydratase/isomerase family. In the central section; belongs to the 3-hydroxyacyl-CoA dehydrogenase family. Heterotetramer of two alpha chains (FadJ) and two beta chains (FadI).

It is found in the cytoplasm. The catalysed reaction is a (3S)-3-hydroxyacyl-CoA = a (2E)-enoyl-CoA + H2O. It carries out the reaction a 4-saturated-(3S)-3-hydroxyacyl-CoA = a (3E)-enoyl-CoA + H2O. It catalyses the reaction a (3S)-3-hydroxyacyl-CoA + NAD(+) = a 3-oxoacyl-CoA + NADH + H(+). The enzyme catalyses (3S)-3-hydroxybutanoyl-CoA = (3R)-3-hydroxybutanoyl-CoA. The protein operates within lipid metabolism; fatty acid beta-oxidation. Its function is as follows. Catalyzes the formation of a hydroxyacyl-CoA by addition of water on enoyl-CoA. Also exhibits 3-hydroxyacyl-CoA epimerase and 3-hydroxyacyl-CoA dehydrogenase activities. In Escherichia coli O45:K1 (strain S88 / ExPEC), this protein is Fatty acid oxidation complex subunit alpha.